Here is a 1396-residue protein sequence, read N- to C-terminus: DNA-directed RNA polymerase subunit beta' (1396 aa).

Residues C73, C75, C88, and C91 each contribute to the Zn(2+) site. Positions 467, 469, and 471 each coordinate Mg(2+). Zn(2+) contacts are provided by C817, C891, C898, and C901.

This sequence belongs to the RNA polymerase beta' chain family. In terms of assembly, the RNAP catalytic core consists of 2 alpha, 1 beta, 1 beta' and 1 omega subunit. When a sigma factor is associated with the core the holoenzyme is formed, which can initiate transcription. The cofactor is Mg(2+). It depends on Zn(2+) as a cofactor.

It carries out the reaction RNA(n) + a ribonucleoside 5'-triphosphate = RNA(n+1) + diphosphate. In terms of biological role, DNA-dependent RNA polymerase catalyzes the transcription of DNA into RNA using the four ribonucleoside triphosphates as substrates. This is DNA-directed RNA polymerase subunit beta' from Orientia tsutsugamushi (strain Boryong) (Rickettsia tsutsugamushi).